Consider the following 664-residue polypeptide: DNA primase (664 aa).

Residues 40–64 (CPFHKEKTPSFTVSPDKQFYYCFGC) form a CHC2-type zinc finger. The segment covering 94–104 (GMDVPREERGG) has biased composition (basic and acidic residues). Residues 94–115 (GMDVPREERGGRGHTPRQPTDS) are disordered. The Toprim domain occupies 262 to 344 (DEIMVVEGYM…GKRVRFLFLP (83 aa)). Mg(2+)-binding residues include Glu-268, Asp-312, and Asp-314. Residues 483-521 (PRKSWNKDKKPWDGKKWDGKKKWDKGGRGDFKAPQRTPV) form a disordered region. A compositionally biased stretch (basic and acidic residues) spans 487-515 (WNKDKKPWDGKKWDGKKKWDKGGRGDFKA).

It belongs to the DnaG primase family. As to quaternary structure, monomer. Interacts with DnaB. Zn(2+) serves as cofactor. The cofactor is Mg(2+).

The catalysed reaction is ssDNA + n NTP = ssDNA/pppN(pN)n-1 hybrid + (n-1) diphosphate.. RNA polymerase that catalyzes the synthesis of short RNA molecules used as primers for DNA polymerase during DNA replication. The chain is DNA primase from Pseudomonas aeruginosa (strain ATCC 15692 / DSM 22644 / CIP 104116 / JCM 14847 / LMG 12228 / 1C / PRS 101 / PAO1).